The sequence spans 109 residues: Mitochondrial import receptor subunit TOM22 homolog (109 aa).

Residues 1–60 (MALVRDDFDDIPDSEIHETIVERIEGLGEMFPDALRSAVHSTVDWSIWGVKGVFSLTKST) lie on the Cytoplasmic side of the membrane. A helical membrane pass occupies residues 61–77 (IWVVSTTSLIAFLPYII). The Mitochondrial intermembrane segment spans residues 78–109 (EKERSDLEKTQVAQQRQMLLGPSAAIQQAKTA).

The protein belongs to the Tom22 family. Forms part of the preprotein translocase complex of the outer mitochondrial membrane (TOM complex).

The protein resides in the mitochondrion outer membrane. Its function is as follows. Central receptor component of the translocase of the outer membrane of mitochondria (TOM complex) responsible for the recognition and translocation of cytosolically synthesized mitochondrial preproteins. Together with the peripheral receptor tomm-20 functions as the transit peptide receptor and facilitates the movement of preproteins into the translocation pore. This Caenorhabditis elegans protein is Mitochondrial import receptor subunit TOM22 homolog.